A 410-amino-acid polypeptide reads, in one-letter code: Transcription factor Dp-1 (410 aa).

Lysine 3 carries the N6-acetyllysine modification. Residue serine 23 is modified to Phosphoserine; by CDK2. A disordered region spans residues 77 to 114 (VVGSPHTPNTHFVSQNQPSDPSPWSAGKRNRKGEKNGK). Residues 82–95 (HTPNTHFVSQNQPS) are compositionally biased toward polar residues. The segment covering 104 to 114 (KRNRKGEKNGK) has biased composition (basic residues). Positions 105–127 (RNRKGEKNGKGLRHFSMKVCEKV) are interaction with CEBPA. Residues 113-195 (GKGLRHFSMK…KKEIKWIGLP (83 aa)) mediate DNA binding. A DEF box motif is present at residues 161–195 (DQKNIRRRVYDALNVLMAMNIISKEKKEIKWIGLP). Residues 204 to 277 (SLEVERQRRL…KKTVIDCSIS (74 aa)) form a dimerization region. The tract at residues 211 to 327 (RRLERIKQKQ…DLRVARSLVP (117 aa)) is enhances binding of RB protein to E2F. Residues 214-246 (ERIKQKQSQLQELILQQIAFKNLVQRNRQVEQQ) are DCB1. The segment at 259-315 (LPFIIVNTSKKTVIDCSISNDKFEYLFNFDNTFEIHDDIEVLKRMGMACGLESGSCS) is DCB2. Residues 370–410 (GALATSSSGSQYSGSRVETPVSCVGEDDEDDEDFNENEEED) are disordered. The span at 375 to 384 (SSSGSQYSGS) shows a compositional bias: low complexity. The span at 394–410 (GEDDEDDEDFNENEEED) shows a compositional bias: acidic residues.

The protein belongs to the E2F/DP family. As to quaternary structure, component of the E2F:DP transcription factor complex. Forms heterodimers with E2F family members. The complex can interact with hypophosphorylated retinoblastoma protein RB1 and related proteins (RBL1 and RBL2) that inhibit the E2F transactivation domain. This repression involves recruitment of histone deacetylase (HDAC). During the cell cycle, from mid-to-late G1 phase, RB family members become phosphorylated, detach from the DRTF1/E2F complex to render E2F transcriptionally active. Part of the E2F6.com-1 complex in G0 phase is composed of E2F6, MGA, MAX, TFDP1, CBX3, BAT8, EUHMTASE1, RING1, RNF2, MBLR, L3MBTL2 YAF2. Component of the DREAM complex (also named LINC complex) at least composed of E2F4, E2F5, LIN9, LIN37, LIN52, LIN54, MYBL1, MYBL2, RBL1, RBL2, RBBP4, TFDP1 and TFDP2. The complex exists in quiescent cells where it represses cell cycle-dependent genes. It dissociates in S phase when LIN9, LIN37, LIN52 and LIN54 form a subcomplex that binds to MYBL2. The complex TFDP1:E2F1 interacts with CEBPA; the interaction prevents CEBPA binding to target gene promoters and represses its transcriptional activity. Ubiquitinated by the BCR(KBTBD5) complex, leading to its subsequent degradation. Post-translationally, phosphorylation by E2F1-bound cyclin A-CDK2, in the S phase, inhibits E2F-mediated DNA binding and transactivation.

The protein localises to the nucleus. The protein resides in the cytoplasm. Functionally, can stimulate E2F-dependent transcription. Binds DNA cooperatively with E2F family members through the E2 recognition site, 5'-TTTC[CG]CGC-3', found in the promoter region of a number of genes whose products are involved in cell cycle regulation or in DNA replication. The E2F1:DP complex appears to mediate both cell proliferation and apoptosis. Blocks adipocyte differentiation by repressing CEBPA binding to its target gene promoters. The polypeptide is Transcription factor Dp-1 (TFDP1) (Bos taurus (Bovine)).